Reading from the N-terminus, the 417-residue chain is Tryptophan synthase beta chain (417 aa).

The residue at position 111 (lysine 111) is an N6-(pyridoxal phosphate)lysine.

The protein belongs to the TrpB family. In terms of assembly, tetramer of two alpha and two beta chains. The cofactor is pyridoxal 5'-phosphate.

The catalysed reaction is (1S,2R)-1-C-(indol-3-yl)glycerol 3-phosphate + L-serine = D-glyceraldehyde 3-phosphate + L-tryptophan + H2O. It functions in the pathway amino-acid biosynthesis; L-tryptophan biosynthesis; L-tryptophan from chorismate: step 5/5. Functionally, the beta subunit is responsible for the synthesis of L-tryptophan from indole and L-serine. This chain is Tryptophan synthase beta chain, found in Fervidobacterium nodosum (strain ATCC 35602 / DSM 5306 / Rt17-B1).